Consider the following 300-residue polypeptide: Tyrosine recombinase XerD (300 aa).

The 84-residue stretch at 6 to 89 (LFHKRLIEQF…ALKVFFHFLK (84 aa)) folds into the Core-binding (CB) domain. Residues 108–293 (RLPSILSTEE…ASESLIEKFH (186 aa)) enclose the Tyr recombinase domain. Active-site residues include Arg-152, Lys-174, His-245, Arg-248, and His-271. Tyr-280 acts as the O-(3'-phospho-DNA)-tyrosine intermediate in catalysis.

This sequence belongs to the 'phage' integrase family. XerD subfamily. In terms of assembly, forms a cyclic heterotetrameric complex composed of two molecules of XerC and two molecules of XerD.

It is found in the cytoplasm. Site-specific tyrosine recombinase, which acts by catalyzing the cutting and rejoining of the recombining DNA molecules. The XerC-XerD complex is essential to convert dimers of the bacterial chromosome into monomers to permit their segregation at cell division. It also contributes to the segregational stability of plasmids. In Chlamydia trachomatis serovar D (strain ATCC VR-885 / DSM 19411 / UW-3/Cx), this protein is Tyrosine recombinase XerD.